A 400-amino-acid polypeptide reads, in one-letter code: Endoglucanase A (400 aa).

The signal sequence occupies residues 1 to 32; the sequence is MTKTFKKFSIAGLALLFMATAAFAGWSTKASA. E187 acts as the Proton donor in catalysis. Catalysis depends on E328, which acts as the Nucleophile.

This sequence belongs to the glycosyl hydrolase 5 (cellulase A) family.

The protein resides in the secreted. The catalysed reaction is Endohydrolysis of (1-&gt;4)-beta-D-glucosidic linkages in cellulose, lichenin and cereal beta-D-glucans.. Strongly inhibited by Hg(2+), Ag(+) and Fe(3+). To a lesser extent, is also inhibited by Pb(2+), Mn(2+), Sn(2+) and Cu(2+). By contrast, Ni(2+), Zn(2+), Co(2+), Ba(2+) and NH(4)(+) do not affect enzyme activity, while 10 mM Ca(2+), and Mg(2+) produce a stimulating effect. Is also strongly inhibited by chemicals such as N-bromosuccinimide and dimethyl(2-dihydroxy-5-nitrobenzyl)sulphonium bromide. Is not affected by N-acetylimidazole. In terms of biological role, endoglucanase with high activity on carboxymethylcellulose (CMC) and lichenan, but not active on Avicel. This is Endoglucanase A (celA) from Paenibacillus barcinonensis.